A 566-amino-acid chain; its full sequence is Protein pacG (566 aa).

Residues 79-326 constitute a DNA-binding region (NDT80); sequence TSFDPPPPAE…RSPRNFQSRK (248 aa). Disordered stretches follow at residues 314 to 422 and 448 to 470; these read VRGR…EAHR and DSRPHTSFSNDLASKSLSVDSGR. Over residues 333–349 the composition is skewed to low complexity; sequence SAAASRKNAQAAAASNN. 3 stretches are compositionally biased toward polar residues: residues 365-391, 403-413, and 452-466; these read VKSSSPETSSNGVPQQSPPNWALATNS, HSSVYSQSSPE, and HTSFSNDLASKSLSV.

The protein resides in the nucleus. The protein localises to the cytoplasm. Its function is as follows. Transcription factor that acts as a positive regulator of nonrepressible acid phosphatase activity. Is a major regulator of responses to nitrogen and carbon starvation and is essential for the expression of genes involved in vegetative incompatibility (like pin-c, het-6, and tol). Vegetative incompatibility is a non-self-recognition system ubiquitous in filamentous fungi which results in programmed cell death. This Emericella nidulans (strain FGSC A4 / ATCC 38163 / CBS 112.46 / NRRL 194 / M139) (Aspergillus nidulans) protein is Protein pacG (pacG).